Reading from the N-terminus, the 112-residue chain is Abdominal ganglion neuropeptides L5-67 (112 aa).

The signal sequence occupies residues 1 to 23 (MKTAVLLVCLAYVMAAILSLCAS). F33 carries the post-translational modification Phenylalanine amide.

The prohormone is proteolytically cleaved in 2 steps, yielding first 2 products: luqin and PRMP. In the second step, PRMP is cleaved to yield luqin-B and luqin-C. Neurons L2-4 and L6, also called giant dorsal LUQ (Left Upper Quadrant) neurons of the abdominal ganglion. Also expressed in smaller neurons in the CNS and in peripheral organs such as the kidney.

It is found in the secreted. The chain is Abdominal ganglion neuropeptides L5-67 from Aplysia californica (California sea hare).